Consider the following 435-residue polypeptide: Nuclear hormone receptor family member nhr-136 (435 aa).

Positions Pro50–Ala129 form a DNA-binding region, nuclear receptor. NR C4-type zinc fingers lie at residues Cys53–Cys73 and Cys89–Cys112. In terms of domain architecture, NR LBD spans Arg194 to Glu430.

This sequence belongs to the nuclear hormone receptor family.

The protein localises to the nucleus. In terms of biological role, orphan nuclear receptor. This chain is Nuclear hormone receptor family member nhr-136 (nhr-136), found in Caenorhabditis elegans.